The chain runs to 114 residues: MVDQNPKRSNEPPVWLMFSAGGMVSGLAFPVLILILGILLPFGIISPDNIIAFSHHWFGKLVILALTIFPMWAGLHRLHHGMHDIKVHVPNGGLIFYGLAAVYSFIVLFAVIAI.

Helical transmembrane passes span 25 to 45, 50 to 70, and 94 to 114; these read SGLAFPVLILILGILLPFGII, IIAFSHHWFGKLVILALTIFP, and LIFYGLAAVYSFIVLFAVIAI.

Belongs to the FrdD family. In terms of assembly, part of an enzyme complex containing four subunits: a flavoprotein (FrdA), an iron-sulfur protein (FrdB), and two hydrophobic anchor proteins (FrdC and FrdD).

It is found in the cell inner membrane. Its function is as follows. Anchors the catalytic components of the fumarate reductase complex to the cell membrane, binds quinones. The sequence is that of Fumarate reductase subunit D from Mannheimia succiniciproducens (strain KCTC 0769BP / MBEL55E).